The chain runs to 91 residues: CRISPR-associated endoribonuclease Cas2 2 (91 aa).

D6 contributes to the Mg(2+) binding site.

Belongs to the CRISPR-associated endoribonuclease Cas2 protein family. In terms of assembly, homodimer, forms a heterotetramer with a Cas1 homodimer. Mg(2+) is required as a cofactor.

CRISPR (clustered regularly interspaced short palindromic repeat), is an adaptive immune system that provides protection against mobile genetic elements (viruses, transposable elements and conjugative plasmids). CRISPR clusters contain sequences complementary to antecedent mobile elements and target invading nucleic acids. CRISPR clusters are transcribed and processed into CRISPR RNA (crRNA). Functions as a ssRNA-specific endoribonuclease. Involved in the integration of spacer DNA into the CRISPR cassette. The sequence is that of CRISPR-associated endoribonuclease Cas2 2 from Moorella thermoacetica (strain ATCC 39073 / JCM 9320).